Reading from the N-terminus, the 689-residue chain is Methionine--tRNA ligase (689 aa).

A 'HIGH' region motif is present at residues Pro15–His25. The Zn(2+) site is built by Cys146, Cys149, Cys159, and Cys162. The 'KMSKS' region motif lies at Lys332–Ser336. Residue Lys335 participates in ATP binding. The interval Asp554–Pro574 is disordered. Residues Asp588–Lys689 enclose the tRNA-binding domain.

This sequence belongs to the class-I aminoacyl-tRNA synthetase family. MetG type 1 subfamily. Homodimer. It depends on Zn(2+) as a cofactor.

Its subcellular location is the cytoplasm. It carries out the reaction tRNA(Met) + L-methionine + ATP = L-methionyl-tRNA(Met) + AMP + diphosphate. Functionally, is required not only for elongation of protein synthesis but also for the initiation of all mRNA translation through initiator tRNA(fMet) aminoacylation. The sequence is that of Methionine--tRNA ligase from Shewanella baltica (strain OS185).